The sequence spans 1037 residues: MWRCGGRQGLGVLRRLSGGHAHHRAWRWNSNRACERALQYKLGDKIHGFTVNQVTSVPELFLTAVKLIHDDTGARYLHLAREDTNNLFSVQFRTTPMDSTGVPHILEHTVLCGSQKYPCRDPFFRMLNRSLSTFMNAFTASDYTLYPFSTQNPKDFQNLLSVYLDATFFPCLRELDFWQEGWRLEHENPRDPQTALVFKGVVFNEMKGAFTDNERIFSQHLQNRLLPDHTYSVVSGGDPLCILELTWEQLKQFHATHYHPSNARFFTYGNFPLEQHLKQIHEEALSKFQKIEPSTAVPAQTPWDKPREFQITCGPDSFATDPSKQTTVSVSFLLPDITDTFEAFTLSLLSSLLTSGPNSPFYKALIESGLGTDFSPDVGYNGYTREAYFSVGLQGIAEKDIETVRSLVDRTIDEVVEKGFEDDRIEALLHKIEIQMKHQSTSFGLMLTSYIASCWNHDGDPVELLKLGNQLAKFRQCLQENPKFLQEKVKQYFKNNQHKLTLSMRPDDKYHEKQAQVEATKLKQKVEALSPGDRQQIYEKGLELRTQQSKPQDASCLPALKVSDIEPTIPVTELDVVLTAGDIPVQYCAQPTNGMVYFRAFSSLNTLPEELRPYVPLFCSVLTKLGCGLLDYREQAQQIELKTGGMSASPHVLPDDSHMDTYEQGVLFSSLCLDRNLPDMMHLWSEIFNNPCFEEEEHFKVLVKMTAQELTNAIPDSGHLYASIRAGRTLTPAGDLQETFSGMDRVRLMKRIAEMTDIKPILRKLPRIKKHLLNGDNMRCSVNATPQQMSQTEKAVEDFLRSIGRSKKERRPVRPHTVEKPVPSSSGGDAHVPHGSQIIRKLVTEPTFKPWQMKTHFLMPFPVNYVGECIRTVPYMDPDHASLKILARLMTAKFLHTEIREKGGAYGGGAKLSHNGIFSLYSYRDPNTIETLQSFGKAVDWAKSGKFTQQDIDEAKLSVFSTVDAPIAPSNKGMDYFLYGLSDGMKQAHREQLFAVSHDKLLAVSNRYLGTGKSTHSLAILGPENPKIAKDPSWTIR.

The N-terminal 15 residues, 1-15 (MWRCGGRQGLGVLRR), are a transit peptide targeting the mitochondrion. His104 contacts Zn(2+). Glu107 functions as the Proton acceptor in the catalytic mechanism. The Zn(2+) site is built by His108 and Glu205. Cys119 and Cys556 are oxidised to a cystine. At Lys759 the chain carries N6-acetyllysine. The residue at position 770 (Lys770) is an N6-acetyllysine; alternate. At Lys770 the chain carries N6-succinyllysine; alternate. The tract at residues 803-834 (IGRSKKERRPVRPHTVEKPVPSSSGGDAHVPH) is disordered. A compositionally biased stretch (basic residues) spans 804–814 (GRSKKERRPVR). Residue Lys849 is modified to N6-succinyllysine. Position 884 is an N6-acetyllysine (Lys884). Lys946 carries the N6-succinyllysine modification.

The protein belongs to the peptidase M16 family. PreP subfamily. Monomer and homodimer; homodimerization is induced by binding of the substrate. Zn(2+) is required as a cofactor. In terms of processing, a disulfide bond locks the enzyme in the closed conformation preventing substrate entry into the catalytic chamber.

The protein localises to the mitochondrion matrix. With respect to regulation, mainly exists in a closed and catalytically competent conformation but a closed-to-open switch allows substrate entry into the catalytic chamber. Substrate binding induces closure and dimerization. A disulfide bond may lock the enzyme in a closed conformation preventing substrate entry into the catalytic chamber, participating in redox regulation of the enzyme. Inhibited by metal-chelating agents. Inhibited by nickel and zinc excess, and slightly activated by manganese. Metalloendopeptidase of the mitochondrial matrix that functions in peptide cleavage and degradation rather than in protein processing. Has an ATP-independent activity. Specifically cleaves peptides in the range of 5 to 65 residues. Shows a preference for cleavage after small polar residues and before basic residues, but without any positional preference. Degrades the transit peptides of mitochondrial proteins after their cleavage. Also degrades other unstructured peptides. It is also able to degrade amyloid-beta protein 40, one of the peptides produced by APP processing, when it accumulates in mitochondrion. It is a highly efficient protease, at least toward amyloid-beta protein 40. Cleaves that peptide at a specific position and is probably not processive, releasing digested peptides intermediates that can be further cleaved subsequently. It is also able to degrade amyloid-beta protein 42. The polypeptide is Presequence protease, mitochondrial (Pongo abelii (Sumatran orangutan)).